The primary structure comprises 419 residues: Phosphoribosylamine--glycine ligase (419 aa).

Residues 109 to 311 form the ATP-grasp domain; it reads KQLLIEAGVP…LEKVLMACVE (203 aa). Residue 135-191 participates in ATP binding; sequence ATKMGAPIVVKADGLAAGKGVIVAQTSAEATTAIAELFDQGFEKIVVEEFLPGEEVS. Positions 281 and 283 each coordinate Mg(2+).

Belongs to the GARS family. Requires Mg(2+) as cofactor. It depends on Mn(2+) as a cofactor.

The catalysed reaction is 5-phospho-beta-D-ribosylamine + glycine + ATP = N(1)-(5-phospho-beta-D-ribosyl)glycinamide + ADP + phosphate + H(+). Its pathway is purine metabolism; IMP biosynthesis via de novo pathway; N(1)-(5-phospho-D-ribosyl)glycinamide from 5-phospho-alpha-D-ribose 1-diphosphate: step 2/2. The protein is Phosphoribosylamine--glycine ligase of Synechocystis sp. (strain ATCC 27184 / PCC 6803 / Kazusa).